The chain runs to 117 residues: Ig heavy chain V region 1-62-3 (117 aa).

A signal peptide spans 1–19; the sequence is MGWSCIMLFLAATATGVHF. The framework-1 stretch occupies residues 20–49; that stretch reads QVQLQQPGAELVKPGASVKLSSKASGYTFT. The interval 50 to 54 is complementarity-determining-1; it reads SYWMH. Positions 55–68 are framework-2; it reads WVKQRPGRGLEWIG. The complementarity-determining-2 stretch occupies residues 69-85; the sequence is RIDPNSGGTKYNEKFKS. Residues 86–117 form a framework-3 region; the sequence is KATLTVDKPSSTAYMQLSSLTSEDSAVYYCAR.

This Mus musculus (Mouse) protein is Ig heavy chain V region 1-62-3 (Ighv1-62-3).